Reading from the N-terminus, the 240-residue chain is UDP-2,3-diacylglucosamine hydrolase (240 aa).

Residues aspartate 8, histidine 10, aspartate 41, asparagine 78, and histidine 113 each contribute to the Mn(2+) site. Substrate is bound at residue 78–79 (NR). Aspartate 121, serine 159, asparagine 163, lysine 166, and histidine 194 together coordinate substrate. Residues histidine 194 and histidine 196 each contribute to the Mn(2+) site.

This sequence belongs to the LpxH family. It depends on Mn(2+) as a cofactor.

Its subcellular location is the cell inner membrane. It catalyses the reaction UDP-2-N,3-O-bis[(3R)-3-hydroxytetradecanoyl]-alpha-D-glucosamine + H2O = 2-N,3-O-bis[(3R)-3-hydroxytetradecanoyl]-alpha-D-glucosaminyl 1-phosphate + UMP + 2 H(+). The protein operates within glycolipid biosynthesis; lipid IV(A) biosynthesis; lipid IV(A) from (3R)-3-hydroxytetradecanoyl-[acyl-carrier-protein] and UDP-N-acetyl-alpha-D-glucosamine: step 4/6. Hydrolyzes the pyrophosphate bond of UDP-2,3-diacylglucosamine to yield 2,3-diacylglucosamine 1-phosphate (lipid X) and UMP by catalyzing the attack of water at the alpha-P atom. Involved in the biosynthesis of lipid A, a phosphorylated glycolipid that anchors the lipopolysaccharide to the outer membrane of the cell. The protein is UDP-2,3-diacylglucosamine hydrolase of Shewanella baltica (strain OS155 / ATCC BAA-1091).